The chain runs to 1264 residues: Valine--tRNA ligase (1264 aa).

An N-acetylserine modification is found at Ser-2. Residues 89 to 219 (GSRAAVLVQQ…YSGARPLSHQ (131 aa)) form the GST C-terminal domain. The tract at residues 217-296 (SHQPGPEAPA…GEKKDVSGPM (80 aa)) is disordered. Basic and acidic residues-rich tracts occupy residues 234 to 248 (LKKEAKKREKLEKFQ) and 261 to 275 (GEKKPKPEKREKRDP). The 'HIGH' region signature appears at 344 to 354 (PNVTGSLHLGH). Phosphoserine occurs at positions 437 and 527. Position 645 is an N6-acetyllysine (Lys-645). Residues 862–866 (KMSKS) carry the 'KMSKS' region motif. Position 865 (Lys-865) interacts with ATP.

This sequence belongs to the class-I aminoacyl-tRNA synthetase family. In terms of assembly, forms high-molecular-mass aggregates with elongation factor 1.

It catalyses the reaction tRNA(Val) + L-valine + ATP = L-valyl-tRNA(Val) + AMP + diphosphate. Can be regulated by protein kinase C-dependent phosphorylation. Catalyzes the attachment of valine to tRNA(Val). This chain is Valine--tRNA ligase, found in Homo sapiens (Human).